A 218-amino-acid polypeptide reads, in one-letter code: Mediator of RNA polymerase II transcription subunit 20 (218 aa).

The protein belongs to the Mediator complex subunit 20 family. In terms of assembly, component of the Mediator complex.

It localises to the nucleus. In terms of biological role, component of the Mediator complex, a coactivator involved in the regulated transcription of nearly all RNA polymerase II-dependent genes. Mediator functions as a bridge to convey information from gene-specific regulatory proteins to the basal RNA polymerase II transcription machinery. Mediator is recruited to promoters by direct interactions with regulatory proteins and serves as a scaffold for the assembly of a functional preinitiation complex with RNA polymerase II and the general transcription factors. This Anopheles gambiae (African malaria mosquito) protein is Mediator of RNA polymerase II transcription subunit 20 (MED20).